A 160-amino-acid chain; its full sequence is Transcription elongation factor GreA (160 aa).

It belongs to the GreA/GreB family.

Necessary for efficient RNA polymerase transcription elongation past template-encoded arresting sites. The arresting sites in DNA have the property of trapping a certain fraction of elongating RNA polymerases that pass through, resulting in locked ternary complexes. Cleavage of the nascent transcript by cleavage factors such as GreA or GreB allows the resumption of elongation from the new 3'terminus. GreA releases sequences of 2 to 3 nucleotides. This Francisella tularensis subsp. tularensis (strain FSC 198) protein is Transcription elongation factor GreA.